Reading from the N-terminus, the 271-residue chain is Acyl-[acyl-carrier-protein]--UDP-N-acetylglucosamine O-acyltransferase (271 aa).

It belongs to the transferase hexapeptide repeat family. LpxA subfamily. Homotrimer.

The protein resides in the cytoplasm. The catalysed reaction is a (3R)-hydroxyacyl-[ACP] + UDP-N-acetyl-alpha-D-glucosamine = a UDP-3-O-[(3R)-3-hydroxyacyl]-N-acetyl-alpha-D-glucosamine + holo-[ACP]. It functions in the pathway glycolipid biosynthesis; lipid IV(A) biosynthesis; lipid IV(A) from (3R)-3-hydroxytetradecanoyl-[acyl-carrier-protein] and UDP-N-acetyl-alpha-D-glucosamine: step 1/6. In terms of biological role, involved in the biosynthesis of lipid A, a phosphorylated glycolipid that anchors the lipopolysaccharide to the outer membrane of the cell. The polypeptide is Acyl-[acyl-carrier-protein]--UDP-N-acetylglucosamine O-acyltransferase (Azorhizobium caulinodans (strain ATCC 43989 / DSM 5975 / JCM 20966 / LMG 6465 / NBRC 14845 / NCIMB 13405 / ORS 571)).